The chain runs to 415 residues: Dynein assembly factor with WD repeat domains 1 (415 aa).

8 WD repeats span residues 90–129 (AHIL…ELHT), 132–174 (GHKN…HTFR), 175–214 (GHTA…EVVT), 217–256 (GHLA…KVHT), 259–298 (GHCA…YVAT), 301–340 (GHDD…CVTK), 343–384 (GHEG…QVLE), and 386–415 (HTDE…RIWR).

The protein belongs to the WD repeat WDR69 family. As to quaternary structure, interacts with IFT46. In terms of tissue distribution, in early mouse embryos, expression is limited to distal, motile ciliated cells of the node.

The protein resides in the cytoplasm. The protein localises to the cytoskeleton. It localises to the flagellum basal body. Its subcellular location is the flagellum axoneme. Its function is as follows. Required for axonemal dynein assembly and ciliary motility in ciliated organs, including Kupffer's vesicle, during embryogenesis. Facilitates the onset of robust cilia motility during development. In Mus musculus (Mouse), this protein is Dynein assembly factor with WD repeat domains 1.